We begin with the raw amino-acid sequence, 296 residues long: Ribosomal protein L11 methyltransferase (296 aa).

4 residues coordinate S-adenosyl-L-methionine: threonine 147, glycine 168, aspartate 190, and asparagine 232.

It belongs to the methyltransferase superfamily. PrmA family.

It is found in the cytoplasm. The catalysed reaction is L-lysyl-[protein] + 3 S-adenosyl-L-methionine = N(6),N(6),N(6)-trimethyl-L-lysyl-[protein] + 3 S-adenosyl-L-homocysteine + 3 H(+). In terms of biological role, methylates ribosomal protein L11. The polypeptide is Ribosomal protein L11 methyltransferase (Marinomonas sp. (strain MWYL1)).